The primary structure comprises 327 residues: Nucleotide-binding protein CYB_0992 (327 aa).

12-19 is a binding site for ATP; it reads GLTGAGKT.

It belongs to the RapZ-like family.

Displays ATPase and GTPase activities. In Synechococcus sp. (strain JA-2-3B'a(2-13)) (Cyanobacteria bacterium Yellowstone B-Prime), this protein is Nucleotide-binding protein CYB_0992.